Reading from the N-terminus, the 468-residue chain is Procollagen C-endopeptidase enhancer 1 (468 aa).

The first 24 residues, 1 to 24, serve as a signal peptide directing secretion; it reads MLPAALTSLLGPFLLAWVLPLARG. The N-linked (GlcNAc...) asparagine glycan is linked to Asn-28. Disulfide bonds link Cys-36–Cys-62, Cys-89–Cys-111, Cys-158–Cys-185, and Cys-212–Cys-235. CUB domains lie at 36–148 and 158–272; these read CGGD…YSGR and CGGR…YRTL. Thr-41 carries the post-translational modification Phosphothreonine. Residue Ser-49 is modified to Phosphoserine. The disordered stretch occupies residues 271–341; the sequence is TLPRDAVEKE…VAPDAPSITC (71 aa). The segment covering 272-281 has biased composition (basic and acidic residues); sequence LPRDAVEKES. Intrachain disulfides connect Cys-341–Cys-409 and Cys-356–Cys-460. The NTR domain occupies 341 to 460; sequence CPKQYKRSGT…ILSNLSKRKC (120 aa). Asn-454 carries an N-linked (GlcNAc...) asparagine glycan.

In terms of assembly, interacts with EFEMP2. Expressed at highest levels in collagen-rich tissues, especially tendon. Also expressed in cornea and sterna.

Its subcellular location is the secreted. Binds to the C-terminal propeptide of type I procollagen and enhances procollagen C-proteinase activity. The chain is Procollagen C-endopeptidase enhancer 1 (Pcolce) from Rattus norvegicus (Rat).